A 99-amino-acid polypeptide reads, in one-letter code: Large ribosomal subunit protein uL23 (99 aa).

The protein belongs to the universal ribosomal protein uL23 family. In terms of assembly, part of the 50S ribosomal subunit. Contacts protein L29, and trigger factor when it is bound to the ribosome.

Functionally, one of the early assembly proteins it binds 23S rRNA. One of the proteins that surrounds the polypeptide exit tunnel on the outside of the ribosome. Forms the main docking site for trigger factor binding to the ribosome. This is Large ribosomal subunit protein uL23 from Streptococcus suis (strain 98HAH33).